The sequence spans 279 residues: Thymidylate synthase (279 aa).

133–134 contacts dUMP; sequence RR. Cysteine 154 functions as the Nucleophile in the catalytic mechanism. DUMP-binding positions include 178–181, asparagine 189, and 219–221; these read RSND and HIY. Aspartate 181 lines the (6R)-5,10-methylene-5,6,7,8-tetrahydrofolate pocket. Alanine 278 contacts (6R)-5,10-methylene-5,6,7,8-tetrahydrofolate.

This sequence belongs to the thymidylate synthase family. Bacterial-type ThyA subfamily. Homodimer.

It localises to the cytoplasm. The enzyme catalyses dUMP + (6R)-5,10-methylene-5,6,7,8-tetrahydrofolate = 7,8-dihydrofolate + dTMP. The protein operates within pyrimidine metabolism; dTTP biosynthesis. Its function is as follows. Catalyzes the reductive methylation of 2'-deoxyuridine-5'-monophosphate (dUMP) to 2'-deoxythymidine-5'-monophosphate (dTMP) while utilizing 5,10-methylenetetrahydrofolate (mTHF) as the methyl donor and reductant in the reaction, yielding dihydrofolate (DHF) as a by-product. This enzymatic reaction provides an intracellular de novo source of dTMP, an essential precursor for DNA biosynthesis. The protein is Thymidylate synthase of Streptococcus agalactiae serotype Ia (strain ATCC 27591 / A909 / CDC SS700).